The primary structure comprises 331 residues: Olfactory receptor 6S1 (331 aa).

Residues 1-29 (MSPDGNHSSDPTEFVLAGLPNLNSARVEL) are Extracellular-facing. Residue asparagine 6 is glycosylated (N-linked (GlcNAc...) asparagine). A helical membrane pass occupies residues 30–50 (FSVFLLVYLLNLTGNVLIVGV). The Cytoplasmic portion of the chain corresponds to 51-59 (VRADTRLQT). The helical transmembrane segment at 60–80 (PMYFFLGNLSCLEILLTSVII) threads the bilayer. Residues 81–99 (PKMLSNFLSRQHTISFAAC) lie on the Extracellular side of the membrane. Residues cysteine 99 and cysteine 182 are joined by a disulfide bond. Residues 100–120 (ITQFYFYFFLGASEFLLLAVM) form a helical membrane-spanning segment. Topologically, residues 121-147 (SADRYLAICHPLRYPLLMSGAVCFRVA) are cytoplasmic. Residues 148–168 (LACWVGGLVPVLGPTVAVALL) form a helical membrane-spanning segment. Residues 169–207 (PFCKQGAVVQHFFCDSGPLLRLACTNTKKLEETDFVLAS) are Extracellular-facing. Residues 208–228 (LVIVSSLLITAVSYGLIVLAV) form a helical membrane-spanning segment. The Cytoplasmic portion of the chain corresponds to 229–242 (LSIPSASGRQKAFS). The chain crosses the membrane as a helical span at residues 243 to 263 (TCTSHLIVVTLFYGSAIFLYV). At 264–274 (RPSQSGSVDTN) the chain is on the extracellular side. A helical transmembrane segment spans residues 275 to 295 (WAVTVITTFVTPLLNPFIYAL). Topologically, residues 296–331 (RNEQVKEALKDMFRKVVAGVLGNLLLDKCLSEKAVK) are cytoplasmic.

It belongs to the G-protein coupled receptor 1 family.

The protein resides in the cell membrane. Its function is as follows. Odorant receptor. The chain is Olfactory receptor 6S1 (OR6S1) from Homo sapiens (Human).